A 261-amino-acid polypeptide reads, in one-letter code: Acyl-[acyl-carrier-protein]--UDP-N-acetylglucosamine O-acyltransferase (261 aa).

It belongs to the transferase hexapeptide repeat family. LpxA subfamily. Homotrimer.

It localises to the cytoplasm. The catalysed reaction is a (3R)-hydroxyacyl-[ACP] + UDP-N-acetyl-alpha-D-glucosamine = a UDP-3-O-[(3R)-3-hydroxyacyl]-N-acetyl-alpha-D-glucosamine + holo-[ACP]. It participates in glycolipid biosynthesis; lipid IV(A) biosynthesis; lipid IV(A) from (3R)-3-hydroxytetradecanoyl-[acyl-carrier-protein] and UDP-N-acetyl-alpha-D-glucosamine: step 1/6. In terms of biological role, involved in the biosynthesis of lipid A, a phosphorylated glycolipid that anchors the lipopolysaccharide to the outer membrane of the cell. This chain is Acyl-[acyl-carrier-protein]--UDP-N-acetylglucosamine O-acyltransferase, found in Aquifex aeolicus (strain VF5).